Here is a 428-residue protein sequence, read N- to C-terminus: Immunoglobulin superfamily member 11 (428 aa).

The first 22 residues, 1–22, serve as a signal peptide directing secretion; the sequence is MTRRRSALASWLLLSLLGVAAS. The 114-residue stretch at 23 to 136 folds into the Ig-like V-type domain; sequence LEVSESPGSV…DRGGRNIGVT (114 aa). At 23-239 the chain is on the extracellular side; that stretch reads LEVSESPGSV…LQVISPQPRS (217 aa). Intrachain disulfides connect cysteine 44–cysteine 120 and cysteine 165–cysteine 215. Asparagine 102 is a glycosylation site (N-linked (GlcNAc...) asparagine). The region spanning 144–234 is the Ig-like C2-type domain; the sequence is PSAPNCQIQG…TCLLDLQVIS (91 aa). The helical transmembrane segment at 240–260 threads the bilayer; the sequence is VGVIAGAVGTGAVLIVICLAL. Residues 261–428 lie on the Cytoplasmic side of the membrane; sequence TSGAFFYWRS…PAQSRAGSLV (168 aa). Position 375 is an omega-N-methylarginine (arginine 375).

In terms of processing, N-glycosylated.

It is found in the cell membrane. In terms of biological role, functions as a cell adhesion molecule through homophilic interaction. Stimulates cell growth. In Rattus norvegicus (Rat), this protein is Immunoglobulin superfamily member 11 (Igsf11).